A 186-amino-acid polypeptide reads, in one-letter code: Large ribosomal subunit protein uL22 (186 aa).

Positions Lys159–Glu186 are disordered. Residues Arg177–Glu186 are compositionally biased toward basic and acidic residues.

This sequence belongs to the universal ribosomal protein uL22 family.

The sequence is that of Large ribosomal subunit protein uL22 (RpL17) from Aedes albopictus (Asian tiger mosquito).